Consider the following 67-residue polypeptide: uncharacterized protein (67 aa).

A run of 2 helical transmembrane segments spans residues 8–28 and 41–61; these read MWFALGSMGLMFLAVASIYLS and ISSFAYMCMLISGIIVFVVVF.

It is found in the cell membrane. This is an uncharacterized protein from Bacillus subtilis (strain 168).